The following is a 471-amino-acid chain: UDP-glycosyltransferase CGT (471 aa).

The active-site Proton acceptor is the H24. H24 contacts an anthocyanidin. D120 functions as the Charge relay in the catalytic mechanism. A UDP-alpha-D-glucose-binding site is contributed by T143. The UDP stretch occupies residues 280-281 (SR). UDP-alpha-D-glucose is bound by residues V343, Q345, H360, W363, N364, S365, and E368. Residue G383 coordinates an anthocyanidin. Positions 384 and 385 each coordinate UDP-alpha-D-glucose.

It belongs to the UDP-glycosyltransferase family.

It carries out the reaction a 3'-hydro-2'-hydroxy-beta-oxodihydrochalcone + UDP-alpha-D-glucose = a 3'-(beta-D-glucopyranosyl)-2'-hydroxy-beta-oxodihydrochalcone + UDP + H(+). UDP-glucose-dependent glucosyltransferase catalyzing the c-glucosylation of 2-hydroxyflavanones. Acts preferentially on the dibenzoylmethane tautomers formed in equilibrium with 2-hydroxyflavanones. No activity with naringenin or naringenin chalcone. The polypeptide is UDP-glycosyltransferase CGT (Oryza sativa subsp. indica (Rice)).